We begin with the raw amino-acid sequence, 372 residues long: Cuticle collagen dpy-10 (372 aa).

An N-terminal signal peptide occupies residues 1–45 (MKNNAKEDYRTFSLTTNYSRQMIYRCVTGLQIGFSLFSFIIVCVA). Triple-helical region stretches follow at residues 144–173 (GPPG…PGTT), 195–251 (GPPG…KGPT), and 259–324 (GPPG…PGVC). The interval 144–372 (GPPGPRGSSG…RAGYQGYGRK (229 aa)) is disordered. Residues 185-196 (EPPPCRPCPKGP) show a composition bias toward pro residues. A compositionally biased stretch (low complexity) spans 197-208 (PGIKGWPGFPGD). Gly residues-rich tracts occupy residues 237-246 (GYRGGPGAPG) and 283-292 (GLTGGQGERG). Low complexity predominate over residues 293-303 (WPGVSGESGEP). Residues 353–363 (GYGGSRGGGDR) are compositionally biased toward gly residues.

Belongs to the cuticular collagen family. As to quaternary structure, collagen polypeptide chains are complexed within the cuticle by disulfide bonds and other types of covalent cross-links.

Nematode cuticles are composed largely of collagen-like proteins. The cuticle functions both as an exoskeleton and as a barrier to protect the worm from its environment. The chain is Cuticle collagen dpy-10 (dpy-10) from Caenorhabditis elegans.